The primary structure comprises 187 residues: Adenylate kinase (187 aa).

Residue 10–15 participates in ATP binding; sequence GSGKGT. The tract at residues 30–59 is NMP; the sequence is STGDLLRAEVAAGSPLGVKAKEVMARGDLV. AMP is bound by residues Thr-31, Arg-36, 57-59, 85-88, and Gln-92; these read DLV and GYPR. Positions 126–136 are LID; that stretch reads GRAKAEGREDD. Arg-127 contacts ATP. Positions 133 and 144 each coordinate AMP. Position 172 (Gly-172) interacts with ATP.

It belongs to the adenylate kinase family. As to quaternary structure, monomer.

The protein localises to the cytoplasm. It catalyses the reaction AMP + ATP = 2 ADP. It participates in purine metabolism; AMP biosynthesis via salvage pathway; AMP from ADP: step 1/1. Its function is as follows. Catalyzes the reversible transfer of the terminal phosphate group between ATP and AMP. Plays an important role in cellular energy homeostasis and in adenine nucleotide metabolism. This Xanthomonas campestris pv. campestris (strain B100) protein is Adenylate kinase.